The following is a 464-amino-acid chain: 3-deoxy-D-manno-octulosonic acid transferase (464 aa).

Residues 2–22 (MLLYYALSFILLPIYFIIILI) traverse the membrane as a helical; Signal-anchor segment. The RPE1 insert domain occupies 47–93 (YSLDFLHNEANKERFKGDTERRTAAYTSVREDSSTGSTSKLPLEASY). The Proton acceptor role is filled by E107. CMP-binding positions include 311–312 (PR), 352–354 (FGE), and 377–380 (NILE).

It belongs to the glycosyltransferase group 1 family.

It is found in the cell inner membrane. The catalysed reaction is lipid IVA (E. coli) + CMP-3-deoxy-beta-D-manno-octulosonate = alpha-Kdo-(2-&gt;6)-lipid IVA (E. coli) + CMP + H(+). The protein operates within bacterial outer membrane biogenesis; LPS core biosynthesis. Involved in lipopolysaccharide (LPS) biosynthesis. Catalyzes the transfer of 3-deoxy-D-manno-octulosonate (Kdo) residue(s) from CMP-Kdo to lipid IV(A), the tetraacyldisaccharide-1,4'-bisphosphate precursor of lipid A. This is 3-deoxy-D-manno-octulosonic acid transferase (waaA) from Rickettsia felis (strain ATCC VR-1525 / URRWXCal2) (Rickettsia azadi).